The sequence spans 277 residues: S-formylglutathione hydrolase FrmB (277 aa).

Residues Ser145, Asp221, and His254 each act as charge relay system in the active site.

This sequence belongs to the esterase D family.

The catalysed reaction is S-formylglutathione + H2O = formate + glutathione + H(+). Serine hydrolase involved in the detoxification of formaldehyde. Hydrolyzes S-formylglutathione to glutathione and formate. The protein is S-formylglutathione hydrolase FrmB (frmB) of Escherichia coli (strain K12 / DH10B).